Consider the following 91-residue polypeptide: PqqA binding protein (91 aa).

Belongs to the PqqD family. As to quaternary structure, monomer. Interacts with PqqE.

Its pathway is cofactor biosynthesis; pyrroloquinoline quinone biosynthesis. Functionally, functions as a PqqA binding protein and presents PqqA to PqqE, in the pyrroloquinoline quinone (PQQ) biosynthetic pathway. The protein is PqqA binding protein of Pseudomonas fluorescens (strain Pf0-1).